An 83-amino-acid polypeptide reads, in one-letter code: Toxin BmKBT (83 aa).

A signal peptide spans 1–19; the sequence is MKAALLLVIFSLMLIGVLT. Residues 21–81 form the LCN-type CS-alpha/beta domain; the sequence is KSGYPTDHEG…TWSRATNKCR (61 aa). 4 disulfide bridges follow: C31-C80, C35-C54, C41-C61, and C45-C63. Position 83 (K83) is a propeptide, removed by a carboxypeptidase.

Belongs to the long (4 C-C) scorpion toxin superfamily. Sodium channel inhibitor family. Beta subfamily. Expressed by the venom gland.

Its subcellular location is the secreted. This toxin increases the peak sodium current, slows down the inactivation of sodium channels (Nav), and prolongs the action potential of dorsal root ganglion neurons, which indicates that it behaves as a classical alpha-toxin. It binds to mammal brain and insect sodium channels, but with a different manner. This peptide may bind to a distinct receptor site on mammal brain sodium channels, which is unconnected with that for BmKAS (a beta-toxin), BmKIT2 (a beta-toxin) or BmK I (an alpha toxin). In contrast, the receptor site for BmKabT on insect sodium channels might be closely related to that for the beta-insect depressant toxin BmKIT2. Possesses potent toxicity in mice but induces only paralysis in cotton bollworm. In Olivierus martensii (Manchurian scorpion), this protein is Toxin BmKBT.